Reading from the N-terminus, the 118-residue chain is NADH-quinone oxidoreductase subunit A (118 aa).

Transmembrane regions (helical) follow at residues 5–25 (FAAVGIALVVAIAINLIMMLM), 61–81 (FLYALVFTAFDVETVFLFPWA), and 90–110 (FAFIEMFVFIVILLVGFWYAW).

This sequence belongs to the complex I subunit 3 family. In terms of assembly, NDH-1 is composed of 14 different subunits. Subunits NuoA, H, J, K, L, M, N constitute the membrane sector of the complex.

It is found in the cell membrane. It carries out the reaction a quinone + NADH + 5 H(+)(in) = a quinol + NAD(+) + 4 H(+)(out). Functionally, NDH-1 shuttles electrons from NADH, via FMN and iron-sulfur (Fe-S) centers, to quinones in the respiratory chain. The immediate electron acceptor for the enzyme in this species is believed to be a menaquinone. Couples the redox reaction to proton translocation (for every two electrons transferred, four hydrogen ions are translocated across the cytoplasmic membrane), and thus conserves the redox energy in a proton gradient. The sequence is that of NADH-quinone oxidoreductase subunit A from Desulfitobacterium hafniense (strain Y51).